We begin with the raw amino-acid sequence, 1579 residues long: DNA-directed RNA polymerase II subunit RPB1 (1579 aa).

Zn(2+)-binding residues include Cys68, Cys71, Cys78, His81, Cys108, Cys111, Cys149, and Cys171. Mg(2+) is bound by residues Asp485, Asp487, and Asp489. Positions 642–654 (PQEFFFHAMAGRE) are bridging helix. Lys1080 is covalently cross-linked (Glycyl lysine isopeptide (Lys-Gly) (interchain with G-Cter in ubiquitin)). Low complexity predominate over residues 1382–1565 (SPTYSPTSPS…NSPQYSPRSP (184 aa)). The segment at 1382-1579 (SPTYSPTSPS…DQNDDKDKKQ (198 aa)) is disordered. 16 repeat units span residues 1385-1391 (YSPTSPS), 1392-1398 (YSPTSPS), 1399-1405 (YSPTSPS), 1406-1412 (YSPTSPS), 1413-1419 (YSPTSPS), 1420-1426 (YSPTSPS), 1427-1433 (YSPTSPS), 1434-1440 (YSPTSPS), 1441-1447 (YSPTSPS), 1448-1454 (YSPTSPS), 1455-1461 (YSPTSPS), 1462-1468 (YSPTSPS), 1469-1475 (YSPTSPS), 1476-1482 (YSPTSPS), 1483-1489 (YSPTSPS), and 1490-1496 (YSPTSPS). The C-terminal domain (CTD); 26 X 7 AA approximate tandem repeats of Y-S-P-T-S-P-[S-A-Q] stretch occupies residues 1385–1566 (YSPTSPSYSP…SPQYSPRSPL (182 aa)). A 17; approximate repeat occupies 1497–1503 (YSPTSPL). Repeat copies occupy residues 1504 to 1510 (YSPTSPS), 1511 to 1517 (YSPTSPS), 1518 to 1524 (YSPTSPS), 1525 to 1531 (YSPTSPS), 1532 to 1538 (YSPTSPQ), 1539 to 1545 (YSPTSPA), and 1546 to 1552 (YSPTSPQ). One copy of the 25; approximate repeat lies at 1553 to 1559 (YSPNSPQ). Residues 1560–1566 (YSPRSPL) form a 26; approximate repeat.

The protein belongs to the RNA polymerase beta' chain family. Component of the RNA polymerase II (Pol II) complex consisting of 12 subunits. Post-translationally, the tandem 7 residues repeats in the C-terminal domain (CTD) can be highly phosphorylated. The phosphorylation activates Pol II. Phosphorylation occurs mainly at residues 'Ser-2' and 'Ser-5' of the heptapeptide repeat. The phosphorylation state is believed to result from the balanced action of site-specific CTD kinases and phosphatase, and a 'CTD code' that specifies the position of Pol II within the transcription cycle has been proposed. In terms of processing, following transcription stress, the elongating form of RNA polymerase II (RNA pol IIo) is polyubiquitinated via 'Lys-63'-linkages on Lys-1080 at DNA damage sites without leading to degradation: ubiquitination promotes RNA pol IIo backtracking to allow access by the transcription-coupled nucleotide excision repair (TC-NER) machinery. Subsequent DEF1-dependent polyubiquitination by the elongin complex via 'Lys-48'-linkages may lead to proteasome-mediated degradation; presumably at stalled RNA pol II where TC-NER has failed, to halt global transcription and enable 'last resort' DNA repair pathways.

The protein localises to the nucleus. The enzyme catalyses RNA(n) + a ribonucleoside 5'-triphosphate = RNA(n+1) + diphosphate. DNA-dependent RNA polymerase catalyzes the transcription of DNA into RNA using the four ribonucleoside triphosphates as substrates. Largest and catalytic component of RNA polymerase II which synthesizes mRNA precursors and many functional non-coding RNAs. Forms the polymerase active center together with the second largest subunit. Pol II is the central component of the basal RNA polymerase II transcription machinery. It is composed of mobile elements that move relative to each other. RPB1 is part of the core element with the central large cleft, the clamp element that moves to open and close the cleft and the jaws that are thought to grab the incoming DNA template. At the start of transcription, a single-stranded DNA template strand of the promoter is positioned within the central active site cleft of Pol II. A bridging helix emanates from RPB1 and crosses the cleft near the catalytic site and is thought to promote translocation of Pol II by acting as a ratchet that moves the RNA-DNA hybrid through the active site by switching from straight to bent conformations at each step of nucleotide addition. During transcription elongation, Pol II moves on the template as the transcript elongates. Elongation is influenced by the phosphorylation status of the C-terminal domain (CTD) of Pol II largest subunit (RPB1), which serves as a platform for assembly of factors that regulate transcription initiation, elongation, termination and mRNA processing. The sequence is that of DNA-directed RNA polymerase II subunit RPB1 (RPB1) from Meyerozyma guilliermondii (strain ATCC 6260 / CBS 566 / DSM 6381 / JCM 1539 / NBRC 10279 / NRRL Y-324) (Yeast).